The chain runs to 252 residues: 3-dehydroquinate dehydratase (252 aa).

3-dehydroquinate contacts are provided by residues Ser21, 46–48, and Arg82; that span reads EWR. His143 serves as the catalytic Proton donor/acceptor. Lys170 serves as the catalytic Schiff-base intermediate with substrate. The 3-dehydroquinate site is built by Arg213, Ser232, and Gln236.

Belongs to the type-I 3-dehydroquinase family. In terms of assembly, homodimer.

The catalysed reaction is 3-dehydroquinate = 3-dehydroshikimate + H2O. The protein operates within metabolic intermediate biosynthesis; chorismate biosynthesis; chorismate from D-erythrose 4-phosphate and phosphoenolpyruvate: step 3/7. Its function is as follows. Involved in the third step of the chorismate pathway, which leads to the biosynthesis of aromatic amino acids. Catalyzes the cis-dehydration of 3-dehydroquinate (DHQ) and introduces the first double bond of the aromatic ring to yield 3-dehydroshikimate. The chain is 3-dehydroquinate dehydratase from Escherichia coli (strain 55989 / EAEC).